Here is a 501-residue protein sequence, read N- to C-terminus: Aspartate--tRNA ligase, cytoplasmic (501 aa).

Thr-52 carries the phosphothreonine modification. Lys-74 is modified (N6-acetyllysine). Position 229 (Glu-229) interacts with L-aspartate. Phosphoserine is present on Ser-249. The interval 251-254 (QLYK) is aspartate. Arg-273 serves as a coordination point for L-aspartate. Residues 273-275 (RAE) and 281-283 (RHL) each bind ATP. The residue at position 374 (Lys-374) is an N6-acetyllysine. Position 424 (Glu-424) interacts with ATP. The L-aspartate site is built by Ser-427 and Arg-431. 472–475 (GLER) contacts ATP.

Belongs to the class-II aminoacyl-tRNA synthetase family. Type 2 subfamily. As to quaternary structure, homodimer. Part of a multisubunit complex that groups tRNA ligases for Arg (RARS1), Asp (DARS1), Gln (QARS1), Ile (IARS1), Leu (LARS1), Lys (KARS1), Met (MARS1) the bifunctional ligase for Glu and Pro (EPRS1) and the auxiliary subunits AIMP1/p43, AIMP2/p38 and EEF1E1/p18.

It is found in the cytoplasm. The enzyme catalyses tRNA(Asp) + L-aspartate + ATP = L-aspartyl-tRNA(Asp) + AMP + diphosphate. Functionally, catalyzes the specific attachment of an amino acid to its cognate tRNA in a 2 step reaction: the amino acid (AA) is first activated by ATP to form AA-AMP and then transferred to the acceptor end of the tRNA. This is Aspartate--tRNA ligase, cytoplasmic (Dars1) from Mus musculus (Mouse).